We begin with the raw amino-acid sequence, 133 residues long: Ribosome-binding factor A (133 aa).

This sequence belongs to the RbfA family. Monomer. Binds 30S ribosomal subunits, but not 50S ribosomal subunits or 70S ribosomes.

It is found in the cytoplasm. In terms of biological role, one of several proteins that assist in the late maturation steps of the functional core of the 30S ribosomal subunit. Associates with free 30S ribosomal subunits (but not with 30S subunits that are part of 70S ribosomes or polysomes). Required for efficient processing of 16S rRNA. May interact with the 5'-terminal helix region of 16S rRNA. The protein is Ribosome-binding factor A of Acinetobacter baumannii (strain ACICU).